A 370-amino-acid polypeptide reads, in one-letter code: Peptidyl-prolyl cis-trans isomerase D (370 aa).

The residue at position 5 (Ser5) is a Phosphoserine. A PPIase cyclophilin-type domain is found at 19–183 (FFDVDIGGER…KLCVIAECGE (165 aa)). At Lys171 the chain carries N6-acetyllysine. A chaperone activity region spans residues 185–215 (KEGDEWGIFPKDGSGDSHPDFPEDADIDLKD). Position 198 is a phosphoserine (Ser198). An interaction with HSP90AB1 region spans residues 214-370 (KDVDKILLIS…EKAVYAKMFA (157 aa)). 3 TPR repeats span residues 223 to 256 (SEDL…LDSS), 273 to 306 (LSCV…DPSN), and 308 to 340 (KALY…APGD).

The protein belongs to the cyclophilin-type PPIase family. PPIase D subfamily. Identified in ESR1 or NR3C1/GCR steroid receptor-chaperone complexes. Found in HSP90 chaperone complexes with kinase clients LCK or EIF2AK1. Two monomers associate with one HSP90 homodimer. Interacts with HSP90AA1. Interacts with HSP90AB1; PPID and FKBP4 compete for binding to HSP90AB1 and the interaction is mutually exclusive with the PPID:HSPA8 interaction. Interacts with HSPA8; PPID and STIP1 but not FKBP4 compete for binding to HSPA8 and the interaction is mutually exclusive with the PPID:HSP90AB1 interaction. Interacts with S100A1 and S100A2; the interactions dissociate the PPID:HSP90AA1 interaction. Interacts with S100A6. Interacts with MYB, ILF2, XRCC6, RACK1 and RPS3. Interacts with cytoplasmic dynein 1 intermediate chain (DYNC1I1 or DYNC1I2).

The protein resides in the cytoplasm. Its subcellular location is the nucleus. It is found in the nucleolus. The protein localises to the nucleoplasm. The catalysed reaction is [protein]-peptidylproline (omega=180) = [protein]-peptidylproline (omega=0). Its activity is regulated as follows. Less sensitive to inhibition by cyclosporin A than is CYP-18. PPIase that catalyzes the cis-trans isomerization of proline imidic peptide bonds in oligopeptides and may therefore assist protein folding. Proposed to act as a co-chaperone in HSP90 complexes such as in unligated steroid receptors heterocomplexes. Different co-chaperones seem to compete for association with HSP90 thus establishing distinct HSP90-co-chaperone-receptor complexes with the potential to exert tissue-specific receptor activity control. May have a preference for estrogen receptor complexes and is not found in glucocorticoid receptor complexes. May be involved in cytoplasmic dynein-dependent movement of the receptor from the cytoplasm to the nucleus. May regulate MYB by inhibiting its DNA-binding activity. Involved in regulation of AHR signaling by promoting the formation of the AHR:ARNT dimer; the function is independent of HSP90 but requires the chaperone activity region. Involved in regulation of UV radiation-induced apoptosis. The chain is Peptidyl-prolyl cis-trans isomerase D from Rattus norvegicus (Rat).